The primary structure comprises 342 residues: Phosphoribosylformylglycinamidine cyclo-ligase (342 aa).

It belongs to the AIR synthase family.

The protein localises to the cytoplasm. The catalysed reaction is 2-formamido-N(1)-(5-O-phospho-beta-D-ribosyl)acetamidine + ATP = 5-amino-1-(5-phospho-beta-D-ribosyl)imidazole + ADP + phosphate + H(+). It participates in purine metabolism; IMP biosynthesis via de novo pathway; 5-amino-1-(5-phospho-D-ribosyl)imidazole from N(2)-formyl-N(1)-(5-phospho-D-ribosyl)glycinamide: step 2/2. In Staphylococcus saprophyticus subsp. saprophyticus (strain ATCC 15305 / DSM 20229 / NCIMB 8711 / NCTC 7292 / S-41), this protein is Phosphoribosylformylglycinamidine cyclo-ligase.